Consider the following 139-residue polypeptide: Gene 22 protein (139 aa).

The polypeptide is Gene 22 protein (22) (Mycobacterium phage D29 (Mycobacteriophage D29)).